A 225-amino-acid chain; its full sequence is Uracil-DNA glycosylase (225 aa).

The active-site Proton acceptor is the Asp65.

This sequence belongs to the uracil-DNA glycosylase (UDG) superfamily. UNG family.

It is found in the cytoplasm. The enzyme catalyses Hydrolyzes single-stranded DNA or mismatched double-stranded DNA and polynucleotides, releasing free uracil.. Functionally, excises uracil residues from the DNA which can arise as a result of misincorporation of dUMP residues by DNA polymerase or due to deamination of cytosine. The polypeptide is Uracil-DNA glycosylase (Bacillus cytotoxicus (strain DSM 22905 / CIP 110041 / 391-98 / NVH 391-98)).